The chain runs to 351 residues: Increased glyphosate resistance protein (351 aa).

The span at 1–18 (MHREDDSTSTGRREERLS) shows a compositional bias: basic and acidic residues. Residues 1-29 (MHREDDSTSTGRREERLSTGKGDSLQPGP) form a disordered region.

In terms of biological role, confers an increase in glyphosate resistance when expressed in E.coli. This chain is Increased glyphosate resistance protein, found in Pseudomonas sp. (strain PG2982).